The sequence spans 122 residues: MSLTNEQIIEAIASKTVTEIVELISAMEEKFGVSAAAAAVAVAAGPAEVAEEKTEFDVVLAEAGANKVAVIKAVRGATGLGLKEAKDLVESAPANLKEGISKAEAEALKKELEEAGAKVEIK.

It belongs to the bacterial ribosomal protein bL12 family. As to quaternary structure, homodimer. Part of the ribosomal stalk of the 50S ribosomal subunit. Forms a multimeric L10(L12)X complex, where L10 forms an elongated spine to which 2 to 4 L12 dimers bind in a sequential fashion. Binds GTP-bound translation factors.

In terms of biological role, forms part of the ribosomal stalk which helps the ribosome interact with GTP-bound translation factors. Is thus essential for accurate translation. This chain is Large ribosomal subunit protein bL12, found in Histophilus somni (strain 129Pt) (Haemophilus somnus).